A 481-amino-acid polypeptide reads, in one-letter code: Deoxyribodipyrimidine photo-lyase (481 aa).

The Photolyase/cryptochrome alpha/beta domain occupies 1–136; the sequence is MQLFWHRRDL…AHAQFHDAVH (136 aa). Tyr228 provides a ligand contact to FAD. Arg232 lines the DNA pocket. Position 240–244 (240–244) interacts with FAD; that stretch reads TSRLS. Interaction with DNA stretches follow at residues 283-290 and 349-350; these read QLAWREFY and NR. 380-382 provides a ligand contact to FAD; that stretch reads DHD. Residue Gln412 coordinates DNA.

It belongs to the DNA photolyase class-1 family. As to quaternary structure, monomer. FAD serves as cofactor. The cofactor is coenzyme F420-(gamma-Glu)n.

The catalysed reaction is cyclobutadipyrimidine (in DNA) = 2 pyrimidine residues (in DNA).. Functionally, involved in repair of UV radiation-induced DNA damage. Catalyzes the light-dependent monomerization (300-600 nm) of cyclobutyl pyrimidine dimers (in cis-syn configuration), which are formed between adjacent bases on the same DNA strand upon exposure to ultraviolet radiation. In Halobacterium salinarum (strain ATCC 700922 / JCM 11081 / NRC-1) (Halobacterium halobium), this protein is Deoxyribodipyrimidine photo-lyase (phr).